Here is a 184-residue protein sequence, read N- to C-terminus: Photosystem I assembly protein Ycf4 (184 aa).

The next 2 membrane-spanning stretches (helical) occupy residues 21 to 41 and 63 to 83; these read YFWA…GLSS and IIMT…WLTI.

It belongs to the Ycf4 family.

It is found in the plastid. The protein localises to the chloroplast thylakoid membrane. Functionally, seems to be required for the assembly of the photosystem I complex. In Gracilaria tenuistipitata var. liui (Red alga), this protein is Photosystem I assembly protein Ycf4.